Consider the following 2113-residue polypeptide: Unconventional myosin-VIIb (2113 aa).

A Myosin motor domain is found at 65 to 760 (QGVDDMIRLG…QDTVLEIRRS (696 aa)). 158–165 (GESGAGKT) serves as a coordination point for ATP. The actin-binding stretch occupies residues 637–659 (LDQLMRILTNCQPYFVRCIKPNE). 6 consecutive IQ domains span residues 745–765 (IFLK…ALDG), 763–792 (LDGA…AAVT), 786–815 (QRRA…GFER), 809–838 (ILVG…RIVQ), 832–861 (MRQR…AVVI), and 855–884 (KRRA…TGPQ). Residue Ser904 is modified to Phosphoserine. The interval 962–1578 (EEEVDSLAEY…STQLLSLLAM (617 aa)) is mediates interaction with ANKS4B. Positions 989–1189 (HIQKPLRYPL…PTWLELQAVK (201 aa)) constitute a MyTH4 1 domain. The 310-residue stretch at 1194-1503 (IPIQVILATG…GGLKERSVFA (310 aa)) folds into the FERM 1 domain. The residue at position 1339 (Thr1339) is a Phosphothreonine. Residue Ser1368 is modified to Phosphoserine. The mediates interaction with CDHR2, CDHR5 and USH1C stretch occupies residues 1497–2113 (KERSVFAMAL…GFRAPAPANP (617 aa)). Positions 1498–1564 (ERSVFAMALQ…PTACLYTIPS (67 aa)) constitute an SH3 domain. 2 MyTH4 domains span residues 1641 to 1790 (YSPE…KAAE) and 1790 to 1896 (EQNV…LNVT). Residue Ser1642 is modified to Phosphoserine. The FERM 2 domain occupies 1796 to 2099 (LHHEVYLPND…SYVQQLLNTV (304 aa)).

This sequence belongs to the TRAFAC class myosin-kinesin ATPase superfamily. Myosin family. Part of the IMAC/intermicrovillar adhesion complex/intermicrovillar tip-link complex composed of ANKS4B, MYO7B, USH1C, CDHR2 and CDHR5. Interacts with CDHR2. Interacts with CDHR5. Interacts with USH1C. Interacts with ANKS4B; requires initial interaction with USH1C. Interacts with CALML4; the interaction mediates the association of CALML4 with the IMAC/intermicrovillar adhesion complex. Expressed primarily in kidney and intestine. Detected in proximal tubule cells of the kidney and enterocytes of the intestine, specifically the distal tips of apical microvilli on these transporting epithelial cells (at protein level).

The protein resides in the cytoplasm. It is found in the cytoskeleton. Its subcellular location is the cell projection. The protein localises to the microvillus. In terms of biological role, myosins are actin-based motor molecules with ATPase activity. Their highly divergent tails are presumed to bind to membranous compartments, which would be moved relative to actin filaments. As part of the intermicrovillar adhesion complex/IMAC plays a role in epithelial brush border differentiation, controlling microvilli organization and length. May link the complex to the actin core bundle of microvilli. The polypeptide is Unconventional myosin-VIIb (Myo7b) (Mus musculus (Mouse)).